Consider the following 413-residue polypeptide: tRNA (guanine-N(7)-)-methyltransferase non-catalytic subunit wdr4 (413 aa).

WD repeat units follow at residues 101-140 (WVVRRCTSLAFTQAEDELYVADKSGDVYSFSILEPHKAGE), 144-183 (GHLSMLLDVALSPDDKYIITADRDEKIRVSFRRSPYNIQA), 187-227 (GHTE…RLHS), and 286-328 (TLTL…WRLC). Residues 386–413 (KKRAAAANGSKPNKKSKTESGAVPQSTS) form a disordered region.

It belongs to the WD repeat TRM82 family. Non-catalytic component of the METTL1-WDR4 complex, composed of mettl1 and wdr4.

The protein localises to the nucleus. Its pathway is tRNA modification; N(7)-methylguanine-tRNA biosynthesis. In terms of biological role, non-catalytic component of the METTL1-WDR4 methyltransferase complex required for the formation of N(7)-methylguanine in a subset of RNA species, such as tRNAs, mRNAs and microRNAs (miRNAs). In the METTL1-WDR4 methyltransferase complex, wdr4 acts as a scaffold for tRNA-binding. Required for the formation of N(7)-methylguanine at position 46 (m7G46) in a large subset of tRNAs that contain the 5'-RAGGU-3' motif within the variable loop. M7G46 interacts with C13-G22 in the D-loop to stabilize tRNA tertiary structure and protect tRNAs from decay. Also required for the formation of N(7)-methylguanine at internal sites in a subset of mRNAs. Also required for methylation of a specific subset of miRNAs. The polypeptide is tRNA (guanine-N(7)-)-methyltransferase non-catalytic subunit wdr4 (wdr4) (Danio rerio (Zebrafish)).